Reading from the N-terminus, the 322-residue chain is p55-v-Fos-transforming protein (322 aa).

The tract at residues 69-95 (APGGRGQSIGRRGKVEQLSPEEEEKRR) is disordered. The bZIP domain occupies 91–154 (EEKRRIRRER…EKLEFILAAH (64 aa)). The interval 93–113 (KRRIRRERNKMAAAKCRNRRR) is basic motif. The leucine-zipper stretch occupies residues 119–147 (LQAETDQLEEEKSALQAEIANLLKEKEKL). Positions 298 to 322 (AAHRKGSSSNEPSSDSLSSPTLLAL) are disordered. The segment covering 304–316 (SSSNEPSSDSLSS) has biased composition (low complexity).

Belongs to the bZIP family. Fos subfamily.

The protein resides in the host nucleus. This Galliformes protein is p55-v-Fos-transforming protein (V-FOS).